A 292-amino-acid polypeptide reads, in one-letter code: Bifunctional protein FolD (292 aa).

Residues 166-168 (GRS), S191, and I232 contribute to the NADP(+) site.

Belongs to the tetrahydrofolate dehydrogenase/cyclohydrolase family. In terms of assembly, homodimer.

It catalyses the reaction (6R)-5,10-methylene-5,6,7,8-tetrahydrofolate + NADP(+) = (6R)-5,10-methenyltetrahydrofolate + NADPH. It carries out the reaction (6R)-5,10-methenyltetrahydrofolate + H2O = (6R)-10-formyltetrahydrofolate + H(+). Its pathway is one-carbon metabolism; tetrahydrofolate interconversion. Functionally, catalyzes the oxidation of 5,10-methylenetetrahydrofolate to 5,10-methenyltetrahydrofolate and then the hydrolysis of 5,10-methenyltetrahydrofolate to 10-formyltetrahydrofolate. The protein is Bifunctional protein FolD of Wolbachia pipientis wMel.